Consider the following 454-residue polypeptide: Bifunctional protein GlmU (454 aa).

Residues 1–240 (MNVSVVILAA…EEEFMGVNSK (240 aa)) are pyrophosphorylase. UDP-N-acetyl-alpha-D-glucosamine-binding positions include 8-11 (LAAG), Lys22, and 87-88 (GT). Asp119 contacts Mg(2+). Positions 152, 166, 181, and 238 each coordinate UDP-N-acetyl-alpha-D-glucosamine. Residue Asn238 participates in Mg(2+) binding. The segment at 241–261 (IQLACAQEIMLQRLREKAMEQ) is linker. The tract at residues 262 to 454 (GVIMNLPHTI…SDKNEEKKEQ (193 aa)) is N-acetyltransferase. UDP-N-acetyl-alpha-D-glucosamine-binding residues include Arg325 and Lys342. His353 serves as the catalytic Proton acceptor. UDP-N-acetyl-alpha-D-glucosamine contacts are provided by Tyr356 and Asn367. Acetyl-CoA contacts are provided by residues Ala370, 376 to 377 (NY), Ser395, Ala413, and Arg430.

This sequence in the N-terminal section; belongs to the N-acetylglucosamine-1-phosphate uridyltransferase family. In the C-terminal section; belongs to the transferase hexapeptide repeat family. In terms of assembly, homotrimer. Requires Mg(2+) as cofactor.

It localises to the cytoplasm. The enzyme catalyses alpha-D-glucosamine 1-phosphate + acetyl-CoA = N-acetyl-alpha-D-glucosamine 1-phosphate + CoA + H(+). It catalyses the reaction N-acetyl-alpha-D-glucosamine 1-phosphate + UTP + H(+) = UDP-N-acetyl-alpha-D-glucosamine + diphosphate. It functions in the pathway nucleotide-sugar biosynthesis; UDP-N-acetyl-alpha-D-glucosamine biosynthesis; N-acetyl-alpha-D-glucosamine 1-phosphate from alpha-D-glucosamine 6-phosphate (route II): step 2/2. Its pathway is nucleotide-sugar biosynthesis; UDP-N-acetyl-alpha-D-glucosamine biosynthesis; UDP-N-acetyl-alpha-D-glucosamine from N-acetyl-alpha-D-glucosamine 1-phosphate: step 1/1. It participates in bacterial outer membrane biogenesis; LPS lipid A biosynthesis. Functionally, catalyzes the last two sequential reactions in the de novo biosynthetic pathway for UDP-N-acetylglucosamine (UDP-GlcNAc). The C-terminal domain catalyzes the transfer of acetyl group from acetyl coenzyme A to glucosamine-1-phosphate (GlcN-1-P) to produce N-acetylglucosamine-1-phosphate (GlcNAc-1-P), which is converted into UDP-GlcNAc by the transfer of uridine 5-monophosphate (from uridine 5-triphosphate), a reaction catalyzed by the N-terminal domain. The chain is Bifunctional protein GlmU from Helicobacter hepaticus (strain ATCC 51449 / 3B1).